The primary structure comprises 239 residues: Ribonuclease HII (239 aa).

The 214-residue stretch at 18–231 (KIIVGLDEAG…SKNLLKEIEE (214 aa)) folds into the RNase H type-2 domain. 3 residues coordinate a divalent metal cation: Asp-24, Glu-25, and Asp-125.

The protein belongs to the RNase HII family. Mn(2+) serves as cofactor. It depends on Mg(2+) as a cofactor.

The protein resides in the cytoplasm. The enzyme catalyses Endonucleolytic cleavage to 5'-phosphomonoester.. In terms of biological role, endonuclease that specifically degrades the RNA of RNA-DNA hybrids. This chain is Ribonuclease HII, found in Methanococcus maripaludis (strain C5 / ATCC BAA-1333).